Reading from the N-terminus, the 240-residue chain is Probable transcriptional regulatory protein Adeh_2184 (240 aa).

This sequence belongs to the TACO1 family.

It is found in the cytoplasm. The chain is Probable transcriptional regulatory protein Adeh_2184 from Anaeromyxobacter dehalogenans (strain 2CP-C).